A 630-amino-acid chain; its full sequence is 1-deoxy-D-xylulose-5-phosphate synthase (630 aa).

Thiamine diphosphate contacts are provided by residues H87 and 128–130; that span reads GHS. Mg(2+) is bound at residue D159. Thiamine diphosphate-binding positions include 160–161, N188, F295, and E377; that span reads GA. N188 is a binding site for Mg(2+).

This sequence belongs to the transketolase family. DXPS subfamily. In terms of assembly, homodimer. Mg(2+) is required as a cofactor. Thiamine diphosphate serves as cofactor.

It catalyses the reaction D-glyceraldehyde 3-phosphate + pyruvate + H(+) = 1-deoxy-D-xylulose 5-phosphate + CO2. It functions in the pathway metabolic intermediate biosynthesis; 1-deoxy-D-xylulose 5-phosphate biosynthesis; 1-deoxy-D-xylulose 5-phosphate from D-glyceraldehyde 3-phosphate and pyruvate: step 1/1. Its function is as follows. Catalyzes the acyloin condensation reaction between C atoms 2 and 3 of pyruvate and glyceraldehyde 3-phosphate to yield 1-deoxy-D-xylulose-5-phosphate (DXP). This chain is 1-deoxy-D-xylulose-5-phosphate synthase, found in Pseudomonas savastanoi pv. phaseolicola (strain 1448A / Race 6) (Pseudomonas syringae pv. phaseolicola (strain 1448A / Race 6)).